We begin with the raw amino-acid sequence, 196 residues long: MAALKALVSGCGRLLRGLLAGPAATSWSRLPARGFREVVETQEGKTTIIEGRITATPKESPNPPNPSGQCPICRWNLKHKYNYDDVLLLSQFIRPHGGMLPRKITGLCQEEHRKIEECVKMAHRAGLLPNHRPRLPEGVVPKSKPQLNRYLTRWAPGSVKPIYKKGPRWNRVRMPVGSPLLRDNVCYSRTPWKLYH.

The transit peptide at 1–34 (MAALKALVSGCGRLLRGLLAGPAATSWSRLPARG) directs the protein to the mitochondrion.

This sequence belongs to the bacterial ribosomal protein bS18 family. Mitochondrion-specific ribosomal protein mL66 subfamily. Component of the mitochondrial large ribosomal subunit (mt-LSU). Mature mammalian 55S mitochondrial ribosomes consist of a small (28S) and a large (39S) subunit. The 28S small subunit contains a 12S ribosomal RNA (12S mt-rRNA) and 30 different proteins. The 39S large subunit contains a 16S rRNA (16S mt-rRNA), a copy of mitochondrial valine transfer RNA (mt-tRNA(Val)), which plays an integral structural role, and 52 different proteins. mL66 forms a zinc-binding site with uL10m.

The protein resides in the mitochondrion. This chain is Large ribosomal subunit protein mL66 (MRPS18A), found in Homo sapiens (Human).